We begin with the raw amino-acid sequence, 296 residues long: CTD kinase subunit gamma (296 aa).

The interval 25–44 (RDSITSSSTTTPPSSQQKLN) is disordered. A compositionally biased stretch (low complexity) spans 29-39 (TSSSTTTPPSS). A Phosphothreonine modification is found at Thr35.

It belongs to the CTK3 family. CTDK-I consists of three subunits, CTK1, CTK2 and CTK3 (also called alpha, beta and gamma). Interacts with CTK1. Heterodimerization with CTK2 is required to protect this subunit from degradation. Ubiquitinated. Ubiquitination leads to degradation by the 26S proteasome pathway.

It is found in the nucleus. It localises to the nucleolus. The protein resides in the cytoplasm. Gamma subunit of the CTDK-I complex, which hyperphosphorylates the C-terminal heptapeptide repeat domain (CTD) of the largest RNA polymerase II subunit. CTDK-I phosphorylates 'Ser-5' if the CTD substrate is not phosphorylated at 'Ser-5', but will phosphorylate 'Ser-2' of a CTD substrate if 'Ser-5' is already phosphorylated. CTDK-I is also more reactive toward substrates that are prephosphorylated at 'Ser-2' or 'Ser-5' compared with an unphosphorylated CTD substrate, therefore efficiently creating doubly phosphorylated CTD repeats. Involved in RNA polymerase I transcription and RNA polymerase II transcriptional elongation, and as part of the CTDK-I complex, pre-mRNA 3'-end processing and SET2 mediated H3K36 methylation. Together with CTK2, required for CTK1 CTD kinase activation. Required for DNA damage induced transcription. Involved in the adaptation to alternative carbon sources, including galactose, glycerol and ethanol, but not raffinose. Required for the integrity of the rDNA locus. The polypeptide is CTD kinase subunit gamma (CTK3) (Saccharomyces cerevisiae (strain ATCC 204508 / S288c) (Baker's yeast)).